Consider the following 401-residue polypeptide: Heat stress transcription factor A-4a (401 aa).

A DNA-binding region spans residues 13 to 107 (LPPFLTKTYE…LMKNIHRRKP (95 aa)). The segment at 122-188 (PLTDSERVRM…TMVSFVSQVL (67 aa)) is hydrophobic repeat HR-A/B. The short motif at 207-213 (RKRRFPR) is the Nuclear localization signal element. The AHA1 signature appears at 256–265 (IAIWENLVSD). Positions 341–350 (DGFWQQFFSE) match the AHA2 motif. A disordered region spans residues 351–373 (NPGSTEQREVQLERKDDKDKAGV). Over residues 356 to 373 (EQREVQLERKDDKDKAGV) the composition is skewed to basic and acidic residues. Residues 388–395 (ITEQLGHL) carry the Nuclear export signal motif.

Belongs to the HSF family. Class A subfamily. Homotrimer. Post-translationally, exhibits temperature-dependent phosphorylation.

The protein localises to the cytoplasm. It is found in the nucleus. Its function is as follows. Transcriptional activator that specifically binds DNA sequence 5'-AGAAnnTTCT-3' known as heat shock promoter elements (HSE). This chain is Heat stress transcription factor A-4a (HSFA4A), found in Arabidopsis thaliana (Mouse-ear cress).